Here is a 519-residue protein sequence, read N- to C-terminus: Protein tweety homolog 1 (519 aa).

The Extracellular segment spans residues 1–42; that stretch reads MTFASFLINFYSVIPRLNFKFHWTNDVFNLEWSSEYFQALAL. A helical transmembrane segment spans residues 43-63; the sequence is VACLGAAVSLLLLVTIIIVWI. Residues 64–82 are Cytoplasmic-facing; sequence CQACHKNETTGKTRRRVRR. A helical transmembrane segment spans residues 83 to 103; sequence LSTVLFIISVLCFFMLGVCLF. The Extracellular portion of the chain corresponds to 104–217; it reads ANEHVNRGMS…VLSLYESERW (114 aa). N-linked (GlcNAc...) asparagine glycosylation is found at N142, N163, and N176. The helical transmembrane segment at 218–238 threads the bilayer; that stretch reads AFLVILLSITMVVLFTGVVAF. The Cytoplasmic portion of the chain corresponds to 239-245; that stretch reads CKQSKKG. The chain crosses the membrane as a helical span at residues 246 to 266; the sequence is AVVFSAIGFFIFVVVWLLISI. Over 267-395 the chain is Extracellular; the sequence is SLPLTIALAD…GTCNQSVAGM (129 aa). N-linked (GlcNAc...) asparagine glycans are attached at residues N328, N341, N348, and N389. Residues 396–416 form a helical membrane-spanning segment; the sequence is SIYMLSILLLGVFLFILLIVV. Topologically, residues 417–519 are cytoplasmic; the sequence is SKTWNLFSRL…YNNYEDRYNM (103 aa). Residues 459-485 form a disordered region; it reads YNPRTRDRTEPSTNTTSGTADEPNAPL.

The protein belongs to the tweety family.

The protein resides in the cell membrane. Its function is as follows. Probable chloride channel. This Caenorhabditis elegans protein is Protein tweety homolog 1 (ttyh-1).